The following is a 291-amino-acid chain: Bis(5'-nucleosyl)-tetraphosphatase, symmetrical (291 aa).

Belongs to the Ap4A hydrolase family.

The catalysed reaction is P(1),P(4)-bis(5'-adenosyl) tetraphosphate + H2O = 2 ADP + 2 H(+). Its function is as follows. Hydrolyzes diadenosine 5',5'''-P1,P4-tetraphosphate to yield ADP. This chain is Bis(5'-nucleosyl)-tetraphosphatase, symmetrical, found in Coxiella burnetii (strain RSA 331 / Henzerling II).